The primary structure comprises 564 residues: MSSERPDGSAVGDAVPKDTAVGGATDSSRTSNDASQTSQDTAVQETPPKEAPAKEAPAKPASELTQSKWKIALLLGLILMSMFLVALDRSILATAIPRITDEFDSAGDIGWYGSAYLLTCCSFQLLYGKVYTFFDIKTVFVANLLLFEVASAICGAAPSSTVLIVGRALAGIGAAGIFAGTIIAMVFLIPLRHRPKIQGLFGAVFGITSISGPLIGGGFTTNVTWRWCFYINLPIGGVALIAIALWMEVPNKPTANLPLAEKIRGLDLLGTAVFIPCIICLLLALQWGGTTYAWSSGRIIALLVVFSVTFVVYAALQAFRPKTSTIPPLYFLPLWFQTVKGVSAAESGVHLLPVMISMIVGSVTGGFFNAKVGYYSPLAVTGSTIMTIGAALIYTFKVDTSTGRWIGSLILYGIGLGWSFQAPNLAVQTSLAKKDVPSALALIMFVGLLAQAVFVSVGDNVFDTQAARNLSWIPGFTASELTSSGAVSFLTALSPSQRVEAIEDYNSALRKVFMIGLVLCAVCVPGLASMEWKSVKSRGSWDEKPAAKPTDKPTEEKKVPPEAV.

A disordered region spans residues 1-61; sequence MSSERPDGSA…PAKEAPAKPA (61 aa). Polar residues predominate over residues 25-44; the sequence is TDSSRTSNDASQTSQDTAVQ. Over residues 47-57 the composition is skewed to basic and acidic residues; the sequence is PPKEAPAKEAP. The next 5 membrane-spanning stretches (helical) occupy residues 71-91, 106-126, 138-158, 169-189, and 199-219; these read IALLLGLILMSMFLVALDRSI, AGDIGWYGSAYLLTCCSFQLL, TVFVANLLLFEVASAICGAAP, LAGIGAAGIFAGTIIAMVFLI, and GLFGAVFGITSISGPLIGGGF. A glycan (N-linked (GlcNAc...) asparagine) is linked at asparagine 222. Transmembrane regions (helical) follow at residues 227–247, 265–285, 299–319, 348–368, 376–396, 405–425, and 438–458; these read WCFYINLPIGGVALIAIALWM, GLDLLGTAVFIPCIICLLLAL, IIALLVVFSVTFVVYAALQAF, GVHLLPVMISMIVGSVTGGFF, SPLAVTGSTIMTIGAALIYTF, WIGSLILYGIGLGWSFQAPNL, and SALALIMFVGLLAQAVFVSVG. N-linked (GlcNAc...) asparagine glycosylation is present at asparagine 469. 2 helical membrane-spanning segments follow: residues 470–490 and 512–532; these read LSWIPGFTASELTSSGAVSFL and VFMIGLVLCAVCVPGLASMEW. The disordered stretch occupies residues 534 to 564; it reads SVKSRGSWDEKPAAKPTDKPTEEKKVPPEAV. A compositionally biased stretch (basic and acidic residues) spans 539-564; sequence GSWDEKPAAKPTDKPTEEKKVPPEAV.

Belongs to the major facilitator superfamily. TCR/Tet family.

It localises to the membrane. In terms of biological role, MFS-type transporter; part of the gene cluster that mediates the biosynthesis of the dimeric xanthones cryptosporioptides. The chain is MFS-type transporter dmxR4 from Cryptosporiopsis sp. (strain 8999).